Here is a 173-residue protein sequence, read N- to C-terminus: Crossover junction endodeoxyribonuclease RuvC (173 aa).

Residues Asp-8, Glu-67, and Asp-139 contribute to the active site. Asp-8, Glu-67, and Asp-139 together coordinate Mg(2+).

It belongs to the RuvC family. As to quaternary structure, homodimer which binds Holliday junction (HJ) DNA. The HJ becomes 2-fold symmetrical on binding to RuvC with unstacked arms; it has a different conformation from HJ DNA in complex with RuvA. In the full resolvosome a probable DNA-RuvA(4)-RuvB(12)-RuvC(2) complex forms which resolves the HJ. Mg(2+) is required as a cofactor.

Its subcellular location is the cytoplasm. It catalyses the reaction Endonucleolytic cleavage at a junction such as a reciprocal single-stranded crossover between two homologous DNA duplexes (Holliday junction).. In terms of biological role, the RuvA-RuvB-RuvC complex processes Holliday junction (HJ) DNA during genetic recombination and DNA repair. Endonuclease that resolves HJ intermediates. Cleaves cruciform DNA by making single-stranded nicks across the HJ at symmetrical positions within the homologous arms, yielding a 5'-phosphate and a 3'-hydroxyl group; requires a central core of homology in the junction. The consensus cleavage sequence is 5'-(A/T)TT(C/G)-3'. Cleavage occurs on the 3'-side of the TT dinucleotide at the point of strand exchange. HJ branch migration catalyzed by RuvA-RuvB allows RuvC to scan DNA until it finds its consensus sequence, where it cleaves and resolves the cruciform DNA. This is Crossover junction endodeoxyribonuclease RuvC from Aliivibrio salmonicida (strain LFI1238) (Vibrio salmonicida (strain LFI1238)).